The following is a 663-amino-acid chain: MEPVPLQDFVSGLDPTSLPRVLRVCSGVYFEGSVYELFGNECCLSTGDLIKVTHVQLQKVVCEYPETGQTLELNPNFTGLFSPLTSLRSYRTLEDLVSAMPQNSTRWPIYFKSTQRIVTKASVVPEDQPLRLEAVEIHHGIRYARCVQVSKTKELLHLPLSQKGPFWRCKPSAPQTLHQILQDPALKDLTLSCPSLPWNSVILKPQYMLQAIMHMRSSIVKIPSTLEVEVEDVTASSQHIHFFKPLRLSEVLAGGGPFPLTTEILEVPEGPPVFLSPWVSFLRKGQRLCIYGPASPSWRVVASSKSRKVPRYFMLSGAYQGKLKRRPREFSTAYDLLGALQPGRPLRVVATKDCDGNEEENPDFSFLAVGDRLEVLRSGQVCGTKGQDIDVLVCQRLSEQSGEEEEDLEEIEDEAEDKEQILLPLYLSGSFVEEVNDSRRYNLVDLTAQYSLPCEVKVVTKDTRHPTDPLASFPGLRLEEKLTEPFLVVSLDSQPEMCFEIPPRWLDLTVVEAEGQPAQVARPLSIAPVEELSEAFYYSLRKLPASESQAPPPRPPKSQGINKKQQNIQSCKESSVKPQVVEPQKSCPQPQLKAKTLEALPKNKSNVYSKISVHKKDRKPNPQTQNSVLSMKPKTSSSLGKHSTMESHLLPDPDMDDHDYEEI.

CABIT regions lie at residues 2–237 (EPVP…TASS) and 238–515 (QHIH…EAEG). Residues 545-663 (ASESQAPPPR…DMDDHDYEEI (119 aa)) form a disordered region. Residues 559-577 (QGINKKQQNIQSCKESSVK) are compositionally biased toward polar residues. Position 596 is a phosphothreonine (T596). The segment covering 621 to 641 (NPQTQNSVLSMKPKTSSSLGK) has biased composition (polar residues). The span at 653–663 (PDMDDHDYEEI) shows a compositional bias: acidic residues. Phosphotyrosine is present on Y660.

Belongs to the themis family. Interacts with VAV1. Interacts with LAT. Interacts constitutively with GRB2, LYN and PLCG2; these interactions increase the activation of PLCG2 and its downstream pathways following B cell receptor stimulation. Phosphorylation at Tyr-660 is induced by LPS. Phosphorylated by Src kinases (Lck or Fyn) following BCR engagement. As to expression, expressed in both developing and mature B-cells with high expression in immature, follicular and B1 B cells. Also expressed in macrophages and dendritic cells. Down-regulated in splenocytes of mice developing arthritis in a collagen-induced model, not in those of mice failing to develop the disease. Transiently down-regulated in splenocytes of mice infected with influenza virus.

The protein resides in the nucleus. It localises to the cytoplasm. May constitute a control point in macrophage inflammatory response, promoting LPS-induced TLR4-mediated TNF production. Determines the threshold for activation of B cells by low-affinity and low-avidity ligands via PLCG2 activation and its downstream pathways. The chain is Protein THEMIS2 from Mus musculus (Mouse).